Here is a 278-residue protein sequence, read N- to C-terminus: Anamorsin homolog (278 aa).

Positions 1–147 (MESVSHLVSN…EIGSSAALPF (147 aa)) are N-terminal SAM-like domain. The interval 147–191 (FANKISLGGNSKMETAKMWTLSSQDFVDDDIDIIDENTLIEEDDF) is linker. [2Fe-2S] cluster contacts are provided by cysteine 204, cysteine 214, cysteine 217, and cysteine 219. The segment at 204–219 (CDSAKKKRKACKNCSC) is fe-S binding site A. Residues cysteine 239, cysteine 242, cysteine 250, and cysteine 253 each contribute to the [4Fe-4S] cluster site. 2 short sequence motifs (cx2C motif) span residues 239-242 (CGSC) and 250-253 (CSSC). The interval 239 to 253 (CGSCYLGDAFRCSSC) is fe-S binding site B.

This sequence belongs to the anamorsin family. Monomer. [2Fe-2S] cluster serves as cofactor. It depends on [4Fe-4S] cluster as a cofactor.

It is found in the cytoplasm. The protein localises to the mitochondrion intermembrane space. Component of the cytosolic iron-sulfur (Fe-S) protein assembly (CIA) machinery. Required for the maturation of extramitochondrial Fe-S proteins. Part of an electron transfer chain functioning in an early step of cytosolic Fe-S biogenesis, facilitating the de novo assembly of a [4Fe-4S] cluster on the cytosolic Fe-S scaffold complex. Electrons are transferred from NADPH via a FAD- and FMN-containing diflavin oxidoreductase. Together with the diflavin oxidoreductase, also required for the assembly of the diferric tyrosyl radical cofactor of ribonucleotide reductase (RNR), probably by providing electrons for reduction during radical cofactor maturation in the catalytic small subunit. This is Anamorsin homolog from Trichoplax adhaerens (Trichoplax reptans).